Here is a 261-residue protein sequence, read N- to C-terminus: Triosephosphate isomerase (261 aa).

10 to 12 is a binding site for substrate; the sequence is NWK. His100 functions as the Electrophile in the catalytic mechanism. The active-site Proton acceptor is Glu172. Residues Gly178, Ser218, and 239-240 each bind substrate; that span reads GG.

It belongs to the triosephosphate isomerase family. As to quaternary structure, homodimer.

It localises to the cytoplasm. The catalysed reaction is D-glyceraldehyde 3-phosphate = dihydroxyacetone phosphate. The protein operates within carbohydrate biosynthesis; gluconeogenesis. It functions in the pathway carbohydrate degradation; glycolysis; D-glyceraldehyde 3-phosphate from glycerone phosphate: step 1/1. Its function is as follows. Involved in the gluconeogenesis. Catalyzes stereospecifically the conversion of dihydroxyacetone phosphate (DHAP) to D-glyceraldehyde-3-phosphate (G3P). The sequence is that of Triosephosphate isomerase from Mycobacterium tuberculosis (strain CDC 1551 / Oshkosh).